Consider the following 236-residue polypeptide: 2,3,4,5-tetrahydropyridine-2,6-dicarboxylate N-acetyltransferase (236 aa).

This sequence belongs to the transferase hexapeptide repeat family. DapH subfamily.

It catalyses the reaction (S)-2,3,4,5-tetrahydrodipicolinate + acetyl-CoA + H2O = L-2-acetamido-6-oxoheptanedioate + CoA. The protein operates within amino-acid biosynthesis; L-lysine biosynthesis via DAP pathway; LL-2,6-diaminopimelate from (S)-tetrahydrodipicolinate (acetylase route): step 1/3. Its function is as follows. Catalyzes the transfer of an acetyl group from acetyl-CoA to tetrahydrodipicolinate. The chain is 2,3,4,5-tetrahydropyridine-2,6-dicarboxylate N-acetyltransferase from Clostridium botulinum (strain Okra / Type B1).